We begin with the raw amino-acid sequence, 140 residues long: uncharacterized protein (140 aa).

A run of 2 helical transmembrane segments spans residues 4–21 (ILKI…YLFG) and 26–48 (LVKV…SGYL).

The protein belongs to the bacteriophage holin family. Cp-1 holin subfamily.

The protein localises to the cell membrane. This is an uncharacterized protein from Listeria innocua serovar 6a (strain ATCC BAA-680 / CLIP 11262).